The chain runs to 1119 residues: Period circadian protein homolog 3 (1119 aa).

The interval 1-48 (MDPCGNPAVPGGDCPQTRGPGLQGSSGQEGPLQGICVDSSHSEHEDRN) is disordered. Residues 54–63 (LIMVVQEMKK) carry the Nuclear export signal 1 motif. PAS domains are found at residues 120–187 (LASE…PTQL) and 259–325 (YEAP…KVLK). The PAC domain occupies 334 to 377 (HSPIRFCTQNGDYVILDSSWSSFVNPWSRKVSFIIGRHKVRTSP). The short motif at 400 to 409 (LQEQIHRLLL) is the Nuclear export signal 3 element. Low complexity predominate over residues 419 to 428 (GYGSLGSSGS). 4 disordered regions span residues 419 to 449 (GYGS…VEEA), 483 to 530 (VKPV…SSSY), 718 to 744 (HSRC…SSSS), and 878 to 910 (LEPT…SRSS). 2 stretches are compositionally biased toward polar residues: residues 429 to 442 (QEQH…SESS) and 491 to 515 (TEPQ…STDT). The tract at residues 551–750 (LKRKCISCTN…SSSSAHLCPH (200 aa)) is CSNK1E binding domain. The Nuclear localization signal signature appears at 720-739 (RCAGSERRKHKRKKLPTPVD). The segment covering 885–903 (HGPRRVEENWETHSEEEHP) has biased composition (basic and acidic residues). At Ser907 the chain carries Phosphoserine. The Nuclear export signal 2 motif lies at 913–920 (LQLNLLQE). A disordered region spans residues 947–1011 (GNSGSRSPPC…QDTHRDRAFS (65 aa)). Low complexity predominate over residues 970-988 (SPSAAASGSSASSVHGSGS). The span at 989-1001 (DYTSEVSENGQRS) shows a compositional bias: polar residues. The tract at residues 1037–1119 (ERGRDTVLRE…VQQKTPVEQL (83 aa)) is CRY binding domain.

Homodimer. Component of the circadian core oscillator, which includes the CRY proteins, CLOCK or NPAS2, BMAL1 or BMAL2, CSNK1D and/or CSNK1E, TIMELESS and the PER proteins. Interacts directly with PER1, PER2, CRY1, CRY2, and TIMELESS; interaction with CRY1 and CRY2 is weak and not rhythmic. Interacts with FBXW11 and BTRC. Phosphorylation by CSNK1E is weak and appears to require association with PER1 and translocation to the nucleus. Post-translationally, ubiquitinated.

The protein resides in the cytoplasm. It localises to the nucleus. In terms of biological role, originally described as a core component of the circadian clock. The circadian clock, an internal time-keeping system, regulates various physiological processes through the generation of approximately 24 hour circadian rhythms in gene expression, which are translated into rhythms in metabolism and behavior. It is derived from the Latin roots 'circa' (about) and 'diem' (day) and acts as an important regulator of a wide array of physiological functions including metabolism, sleep, body temperature, blood pressure, endocrine, immune, cardiovascular, and renal function. Consists of two major components: the central clock, residing in the suprachiasmatic nucleus (SCN) of the brain, and the peripheral clocks that are present in nearly every tissue and organ system. Both the central and peripheral clocks can be reset by environmental cues, also known as Zeitgebers (German for 'timegivers'). The predominant Zeitgeber for the central clock is light, which is sensed by retina and signals directly to the SCN. The central clock entrains the peripheral clocks through neuronal and hormonal signals, body temperature and feeding-related cues, aligning all clocks with the external light/dark cycle. Circadian rhythms allow an organism to achieve temporal homeostasis with its environment at the molecular level by regulating gene expression to create a peak of protein expression once every 24 hours to control when a particular physiological process is most active with respect to the solar day. Transcription and translation of core clock components (CLOCK, NPAS2, BMAL1, BMAL2, PER1, PER2, PER3, CRY1 and CRY2) plays a critical role in rhythm generation, whereas delays imposed by post-translational modifications (PTMs) are important for determining the period (tau) of the rhythms (tau refers to the period of a rhythm and is the length, in time, of one complete cycle). A diurnal rhythm is synchronized with the day/night cycle, while the ultradian and infradian rhythms have a period shorter and longer than 24 hours, respectively. Disruptions in the circadian rhythms contribute to the pathology of cardiovascular diseases, cancer, metabolic syndromes and aging. A transcription/translation feedback loop (TTFL) forms the core of the molecular circadian clock mechanism. Transcription factors, CLOCK or NPAS2 and BMAL1 or BMAL2, form the positive limb of the feedback loop, act in the form of a heterodimer and activate the transcription of core clock genes and clock-controlled genes (involved in key metabolic processes), harboring E-box elements (5'-CACGTG-3') within their promoters. The core clock genes: PER1/2/3 and CRY1/2 which are transcriptional repressors form the negative limb of the feedback loop and interact with the CLOCK|NPAS2-BMAL1|BMAL2 heterodimer inhibiting its activity and thereby negatively regulating their own expression. This heterodimer also activates nuclear receptors NR1D1, NR1D2, RORA, RORB and RORG, which form a second feedback loop and which activate and repress BMAL1 transcription, respectively. Has a redundant role with the other PER proteins PER1 and PER2 and is not essential for the circadian rhythms maintenance. In contrast, plays an important role in sleep-wake timing and sleep homeostasis probably through the transcriptional regulation of sleep homeostasis-related genes, without influencing circadian parameters. Can bind heme. This is Period circadian protein homolog 3 (Per3) from Rattus norvegicus (Rat).